Here is a 570-residue protein sequence, read N- to C-terminus: Urease subunit alpha (570 aa).

Positions 131 to 570 constitute a Urease domain; it reads GGMDSHIHFI…LPMAQRYFLF (440 aa). Positions 136, 138, and 219 each coordinate Ni(2+). N6-carboxylysine is present on K219. Residue H221 participates in substrate binding. Positions 248 and 274 each coordinate Ni(2+). The active-site Proton donor is H322. Residue D362 coordinates Ni(2+).

The protein belongs to the metallo-dependent hydrolases superfamily. Urease alpha subunit family. In terms of assembly, heterotrimer of UreA (gamma), UreB (beta) and UreC (alpha) subunits. Three heterotrimers associate to form the active enzyme. Ni cation serves as cofactor. Post-translationally, carboxylation allows a single lysine to coordinate two nickel ions.

It is found in the cytoplasm. The enzyme catalyses urea + 2 H2O + H(+) = hydrogencarbonate + 2 NH4(+). Its pathway is nitrogen metabolism; urea degradation; CO(2) and NH(3) from urea (urease route): step 1/1. This chain is Urease subunit alpha, found in Allorhizobium ampelinum (strain ATCC BAA-846 / DSM 112012 / S4) (Agrobacterium vitis (strain S4)).